The sequence spans 374 residues: WAT1-related protein At1g60050 (374 aa).

Helical transmembrane passes span 11–31 (IVPF…TILA), 42–62 (FVFI…YSFY), 82–102 (IFLL…LGLS), 107–127 (IVVC…SLAL), 145–165 (IGTL…GPFI), 194–214 (WALG…WNII), 228–248 (VVSA…AFME), 255–275 (ELKL…GSII), 292–312 (VPLF…SFFV), and 315–335 (LHYG…LIMW). The EamA domain maps to 26–155 (ALTILAKTAL…GTLICFTGAF (130 aa)).

The protein belongs to the drug/metabolite transporter (DMT) superfamily. Plant drug/metabolite exporter (P-DME) (TC 2.A.7.4) family.

The protein resides in the membrane. The sequence is that of WAT1-related protein At1g60050 from Arabidopsis thaliana (Mouse-ear cress).